The sequence spans 3955 residues: Nonribosomal peptide synthetase fmqA (3955 aa).

Residues 293-691 (SYSELETLSL…AQACCTIRNV (399 aa)) are adenylation 1. The 74-residue stretch at 806–879 (THKETLIHQL…DLARLTDVVN (74 aa)) folds into the Carrier 1 domain. Ser-840 carries the O-(pantetheine 4'-phosphoryl)serine modification. The segment at 916 to 1187 (QDIYPCTPLQ…IATVPLRVRL (272 aa)) is condensation 1. An adenylation 2 region spans residues 1371-1766 (TYAELGELSD…DEVEKHVYQC (396 aa)). The Carrier 2 domain maps to 1880–1956 (EPTSVAEREM…KIMSHESSLS (77 aa)). Ser-1917 carries the post-translational modification O-(pantetheine 4'-phosphoryl)serine. Residues 1970–2261 (FALSPIQQMF…FTTMWPVVAE (292 aa)) are epimerase. The condensation 2 stretch occupies residues 2438 to 2724 (EDIYPCSPSQ…FNPLPCRVHL (287 aa)). The adenylation 3 stretch occupies residues 2906–3299 (TYGQLDELSS…GEVEANVQHC (394 aa)). One can recognise a Carrier 3 domain in the interval 3422–3498 (APSTEEEKKL…DLAKVAVPKS (77 aa)). Ser-3459 bears the O-(pantetheine 4'-phosphoryl)serine mark. The segment at 3541 to 3805 (PGTQAQQFFI…CLNFIPLRVM (265 aa)) is condensation 3.

It belongs to the NRP synthetase family. As to quaternary structure, interacts with the mitogen-activated protein kinase mpkA.

The protein localises to the cytoplasmic vesicle. It participates in alkaloid biosynthesis. In terms of biological role, nonribosomal peptide synthetase; part of the gene cluster that mediates the biosynthesis of the antitumor fumiquinazolines that confer a dual-usage capability to defend against phagocytes in the environment and animal hosts. The simplest member is fumiquinazoline F (FQF) with a 6-6-6 tricyclic core derived from anthranilic acid (Ant), tryptophan (Trp), and alanine (Ala). The trimodular NRPS fmqA is responsible for FQF formation. Modules 1, 2 and 3 of fmqA are predicted to activate and load Ant, Trp and Ala, respectively, providing for the assembly of an Ant-Trp-Ala-S-enzyme intermediate that would undergo double cyclization for chain release and generation of the tricyclic 6-6-6 product fumiquinazoline F. The presence of an E domain predicted for module 2 of fmqA is consistent with epimerization of L-Trp to D-Trp during assembly to generate the R-stereocenter at C14 of FQF. The FAD-dependent monooxygenase fmqB and the monomodular NRPS fmqC then maturate FQF to FQA. FmqB oxidizes the 2',3'-double bond of the indole side chain of FQF, and fmqC activates L-Ala as the adenylate, installs it as the pantetheinyl thioester on its carrier protein domain, and acylates the oxidized indole for subsequent intramolecular cyclization to create the 6-5-5-imidazolindolone of FQA. The FAD-linked oxidoreductase fmqD introduces a third layer of scaffold complexity by converting FQA to the spirohemiaminal FQC, presumably by catalyzing the formation of a transient imine within the pyrazinone ring. FQC subsequently converts nonenzymatically to the known cyclic aminal FQD. This Aspergillus fumigatus (strain ATCC MYA-4609 / CBS 101355 / FGSC A1100 / Af293) (Neosartorya fumigata) protein is Nonribosomal peptide synthetase fmqA.